The primary structure comprises 345 residues: UDP-3-O-acylglucosamine N-acyltransferase (345 aa).

The Proton acceptor role is filled by His248.

It belongs to the transferase hexapeptide repeat family. LpxD subfamily. Homotrimer.

The enzyme catalyses a UDP-3-O-[(3R)-3-hydroxyacyl]-alpha-D-glucosamine + a (3R)-hydroxyacyl-[ACP] = a UDP-2-N,3-O-bis[(3R)-3-hydroxyacyl]-alpha-D-glucosamine + holo-[ACP] + H(+). It functions in the pathway bacterial outer membrane biogenesis; LPS lipid A biosynthesis. Catalyzes the N-acylation of UDP-3-O-acylglucosamine using 3-hydroxyacyl-ACP as the acyl donor. Is involved in the biosynthesis of lipid A, a phosphorylated glycolipid that anchors the lipopolysaccharide to the outer membrane of the cell. This chain is UDP-3-O-acylglucosamine N-acyltransferase, found in Prochlorococcus marinus (strain SARG / CCMP1375 / SS120).